Reading from the N-terminus, the 269-residue chain is MPELPEVETSRRGIEPHLVGATILHAVVRNGRLRWPVSNEIHTLSDKPVLSVQRRAKYLLLELPDGWIIIHLGMSGSLRILSEELPAEKHDHVDLVMSNGKVLRYTDPRRFGAWLWTKELEGHNVLAHLGPEPLSEAFNAEYLKARCAKKKTPIKPWLMDNKLVVGVGNIYASESLFAAGIHPDRLASSLSEQECEILVKVIKAVLLRSIEQGGTTLKDFLQSDGKPGYFAQELQVYGRKGEPCRVCGTPIVASKHAQRATFYCRQCQK.

The active-site Schiff-base intermediate with DNA is the P2. The active-site Proton donor is the E3. K57 functions as the Proton donor; for beta-elimination activity in the catalytic mechanism. Positions 90, 109, and 150 each coordinate DNA. The FPG-type zinc-finger motif lies at 235–269; that stretch reads QVYGRKGEPCRVCGTPIVASKHAQRATFYCRQCQK. The active-site Proton donor; for delta-elimination activity is R259.

Belongs to the FPG family. Monomer. Requires Zn(2+) as cofactor.

The enzyme catalyses Hydrolysis of DNA containing ring-opened 7-methylguanine residues, releasing 2,6-diamino-4-hydroxy-5-(N-methyl)formamidopyrimidine.. It carries out the reaction 2'-deoxyribonucleotide-(2'-deoxyribose 5'-phosphate)-2'-deoxyribonucleotide-DNA = a 3'-end 2'-deoxyribonucleotide-(2,3-dehydro-2,3-deoxyribose 5'-phosphate)-DNA + a 5'-end 5'-phospho-2'-deoxyribonucleoside-DNA + H(+). Its function is as follows. Involved in base excision repair of DNA damaged by oxidation or by mutagenic agents. Acts as a DNA glycosylase that recognizes and removes damaged bases. Has a preference for oxidized purines, such as 7,8-dihydro-8-oxoguanine (8-oxoG). Has AP (apurinic/apyrimidinic) lyase activity and introduces nicks in the DNA strand. Cleaves the DNA backbone by beta-delta elimination to generate a single-strand break at the site of the removed base with both 3'- and 5'-phosphates. This chain is Formamidopyrimidine-DNA glycosylase, found in Enterobacter sp. (strain 638).